The chain runs to 97 residues: Coiled-coil domain-containing protein 167 (97 aa).

Positions 36–80 form a coiled coil; that stretch reads LRKMELTEEGRKSLEKEKSSLSSRLSNYERELKSLRHENRKNMLL. The chain crosses the membrane as a helical span at residues 78–95; the sequence is MLLSVAIFLLFAVGYYCW.

It localises to the membrane. This Xenopus tropicalis (Western clawed frog) protein is Coiled-coil domain-containing protein 167 (ccdc167).